We begin with the raw amino-acid sequence, 511 residues long: Myrosinase 4 (511 aa).

The first 23 residues, 1-23, serve as a signal peptide directing secretion; it reads MAIPKAHYSLAVLVLLFVVVSSS. 3 disulfide bridges follow: cysteine 31/cysteine 450, cysteine 39/cysteine 445, and cysteine 230/cysteine 233. Residues asparagine 46 and asparagine 53 are each glycosylated (N-linked (GlcNAc...) asparagine). A beta-D-glucoside contacts are provided by residues glutamine 64, histidine 165, and 210–211; that span reads NQ. A beta-D-glucoside contacts are provided by tyrosine 351 and glutamate 418. Residue glutamate 418 is the Nucleophile of the active site. A glycan (N-linked (GlcNAc...) asparagine) is linked at asparagine 428. A beta-D-glucoside contacts are provided by residues tryptophan 467, 474-475, and phenylalanine 483; that span reads EF. A glycan (N-linked (GlcNAc...) asparagine) is linked at asparagine 489.

The protein belongs to the glycosyl hydrolase 1 family. Specifically expressed in roots.

It carries out the reaction a thioglucoside + H2O = a sugar + a thiol.. It catalyses the reaction Hydrolysis of terminal, non-reducing beta-D-glucosyl residues with release of beta-D-glucose.. Functionally, hydrolyzes sinigrin and, with lower efficiency, p-nitrophenyl beta-D-glucoside. In Arabidopsis thaliana (Mouse-ear cress), this protein is Myrosinase 4.